We begin with the raw amino-acid sequence, 157 residues long: Phosphopantetheine adenylyltransferase (157 aa).

Serine 8 provides a ligand contact to substrate. ATP-binding positions include 8 to 9 and histidine 16; that span reads SF. The substrate site is built by lysine 40, threonine 72, and arginine 86. ATP is bound by residues 87 to 89, glutamate 97, and 122 to 128; these read GLR and YSFLSSS.

This sequence belongs to the bacterial CoaD family. In terms of assembly, homohexamer. Mg(2+) is required as a cofactor.

It is found in the cytoplasm. It catalyses the reaction (R)-4'-phosphopantetheine + ATP + H(+) = 3'-dephospho-CoA + diphosphate. The protein operates within cofactor biosynthesis; coenzyme A biosynthesis; CoA from (R)-pantothenate: step 4/5. Functionally, reversibly transfers an adenylyl group from ATP to 4'-phosphopantetheine, yielding dephospho-CoA (dPCoA) and pyrophosphate. The polypeptide is Phosphopantetheine adenylyltransferase (Gloeothece citriformis (strain PCC 7424) (Cyanothece sp. (strain PCC 7424))).